A 397-amino-acid polypeptide reads, in one-letter code: DNA-directed RNA polymerase subunit Rpo1C (397 aa).

Belongs to the RNA polymerase beta' chain family. As to quaternary structure, part of the RNA polymerase complex.

It is found in the cytoplasm. The enzyme catalyses RNA(n) + a ribonucleoside 5'-triphosphate = RNA(n+1) + diphosphate. Its function is as follows. DNA-dependent RNA polymerase (RNAP) catalyzes the transcription of DNA into RNA using the four ribonucleoside triphosphates as substrates. Forms part of the jaw domain. The polypeptide is DNA-directed RNA polymerase subunit Rpo1C (Halobacterium salinarum (strain ATCC 29341 / DSM 671 / R1)).